A 195-amino-acid chain; its full sequence is Probable GTP-binding protein EngB (195 aa).

Residues glutamate 24–leucine 195 form the EngB-type G domain. GTP-binding positions include glycine 32 to serine 39, glycine 59 to leucine 63, aspartate 77 to glycine 80, threonine 144 to aspartate 147, and phenylalanine 176 to serine 178. 2 residues coordinate Mg(2+): serine 39 and threonine 61.

It belongs to the TRAFAC class TrmE-Era-EngA-EngB-Septin-like GTPase superfamily. EngB GTPase family. Requires Mg(2+) as cofactor.

Necessary for normal cell division and for the maintenance of normal septation. The protein is Probable GTP-binding protein EngB of Streptococcus pneumoniae serotype 4 (strain ATCC BAA-334 / TIGR4).